A 714-amino-acid chain; its full sequence is Transcription factor SFL2 (714 aa).

The DNA-binding element occupies 15–134; that stretch reads AFVHKLYTML…LVYIKRRSSS (120 aa). 3 disordered regions span residues 187 to 467, 565 to 658, and 670 to 714; these read YYQQ…VGVT, STSV…NNTN, and SHSQ…NMNK. 2 stretches are compositionally biased toward pro residues: residues 193–207 and 223–235; these read GQVP…PPHQ and QPPP…PPQP. Polar residues predominate over residues 266–275; sequence LDQTQPLSYT. Low complexity predominate over residues 276 to 285; the sequence is PQLEYQQQQY. Pro residues predominate over residues 286–296; it reads PQPPLPPPPPQ. 2 stretches are compositionally biased toward polar residues: residues 310 to 321 and 354 to 372; these read DNLSRPSPNEQH and SEGS…LNNE. Residues 376-389 show a composition bias toward low complexity; sequence ESSTSSSSTTVTST. 2 stretches are compositionally biased toward polar residues: residues 413-435 and 444-461; these read SRMN…TQNG and LIPS…TGTD. A compositionally biased stretch (low complexity) spans 574–591; it reads GPFSTSTSTSTTSPTLSS. The span at 599-608 shows a compositional bias: polar residues; that stretch reads EPQNSTIANG. Low complexity-rich tracts occupy residues 609-641 and 648-658; these read TSIR…RQLS and QQQQQPNNNTN. The segment covering 703 to 714 has biased composition (basic and acidic residues); the sequence is SKSDDDTDNMNK.

Belongs to the HSF family.

It is found in the nucleus. Its function is as follows. Transcription factor that plays a role of activator of filamentous growth and which is involved in invasive growth at a high temperature. Required for human oral epithelium colonization and damage. Promotes filamentous growth in EFG1- and FLO8-dependent manners. Antagonizes functions of SFL1. This chain is Transcription factor SFL2 (SFL2), found in Candida albicans (strain SC5314 / ATCC MYA-2876) (Yeast).